The sequence spans 616 residues: Cleavage stimulation factor subunit 2 tau variant (616 aa).

The RRM domain maps to Arg16–Ser94. Disordered stretches follow at residues Gly203 to His241 and Ile262 to Met418. Low complexity-rich tracts occupy residues Pro223–Asn233 and Val319–Gly331. Thr320 bears the Phosphothreonine mark. A compositionally biased stretch (basic and acidic residues) spans Ser368–Arg381. The stretch at Met418 to Ala422 is one 1-1 repeat. The segment at Met418–Gly462 is 9 X 5 AA tandem repeats of M-E-T-R-[AG]. The stretch at Met423 to Val427 is one 1-2; approximate repeat. A 1-3; approximate repeat occupies Leu428–Val432. The stretch at Met433–Gly437 is one 1-4; approximate repeat. A 1-5; approximate repeat occupies Met438–Ala442. A 1-6 repeat occupies Met443–Gly447. A 1-7; approximate repeat occupies Met448–Gly452. Residues Met453 to Gly457 form a 1-8; approximate repeat. One copy of the 1-9; approximate repeat lies at Leu458–Gly462. Repeat copies occupy residues Gly505–Gln509, Gly510–Gln514, Gly515–Gln519, and Gly520–Gln524. The tract at residues Gly505–Gln549 is 9 X 5 AA tandem repeats of G-[AT]-G-[MI]-Q. A 2-5; approximate repeat occupies Gly525–Gln529. A 2-6 repeat occupies Gly530 to Gln534. The stretch at Gly535–Gln539 is one 2-7; approximate repeat. One copy of the 2-8; approximate repeat lies at Gly540–Gln544. Residues Gly542–Asp573 form a disordered region. The 2-9; approximate repeat unit spans residues Gly545–Gln549. A compositionally biased stretch (low complexity) spans Gly550–Gln568. Ser563 bears the Phosphoserine mark.

The protein resides in the nucleus. Its function is as follows. May play a significant role in AAUAAA-independent mRNA polyadenylation in germ cells. Directly involved in the binding to pre-mRNAs. This is Cleavage stimulation factor subunit 2 tau variant (CSTF2T) from Homo sapiens (Human).